The primary structure comprises 78 residues: Dihydrofolate reductase type 2 (78 aa).

NADP(+) is bound by residues lysine 32 and 66–69; that span reads VQIY. Isoleucine 68 contributes to the substrate binding site.

Homotetramer.

The enzyme catalyses (6S)-5,6,7,8-tetrahydrofolate + NADP(+) = 7,8-dihydrofolate + NADPH + H(+). It functions in the pathway cofactor biosynthesis; tetrahydrofolate biosynthesis; 5,6,7,8-tetrahydrofolate from 7,8-dihydrofolate: step 1/1. Functionally, key enzyme in folate metabolism. Catalyzes an essential reaction for de novo glycine and purine synthesis, and for DNA precursor synthesis. The protein is Dihydrofolate reductase type 2 of Escherichia coli.